A 658-amino-acid polypeptide reads, in one-letter code: Probable rhamnogalacturonate lyase B (658 aa).

A signal peptide spans 1–19; that stretch reads MRFAIPLGAACAWAGVALA. 8 N-linked (GlcNAc...) asparagine glycosylation sites follow: Asn110, Asn143, Asn239, Asn280, Asn522, Asn530, Asn592, and Asn633.

This sequence belongs to the polysaccharide lyase 4 family.

The protein localises to the secreted. The enzyme catalyses Endotype eliminative cleavage of L-alpha-rhamnopyranosyl-(1-&gt;4)-alpha-D-galactopyranosyluronic acid bonds of rhamnogalacturonan I domains in ramified hairy regions of pectin leaving L-rhamnopyranose at the reducing end and 4-deoxy-4,5-unsaturated D-galactopyranosyluronic acid at the non-reducing end.. Its function is as follows. Pectinolytic enzymes consist of four classes of enzymes: pectin lyase, polygalacturonase, pectin methylesterase and rhamnogalacturonase. Degrades the rhamnogalacturonan I (RG-I) backbone of pectin. The protein is Probable rhamnogalacturonate lyase B (rglB) of Aspergillus fumigatus (strain CBS 144.89 / FGSC A1163 / CEA10) (Neosartorya fumigata).